The sequence spans 116 residues: Iron-sulfur cluster insertion protein ErpA (116 aa).

Residues C44, C108, and C110 each contribute to the iron-sulfur cluster site.

It belongs to the HesB/IscA family. As to quaternary structure, homodimer. It depends on iron-sulfur cluster as a cofactor.

In terms of biological role, required for insertion of 4Fe-4S clusters for at least IspG. This Shewanella putrefaciens (strain CN-32 / ATCC BAA-453) protein is Iron-sulfur cluster insertion protein ErpA.